A 157-amino-acid chain; its full sequence is Jacalin-related lectin 15 (157 aa).

The region spanning 13 to 152 (ADKLEAKGGN…LTSLGAYFAP (140 aa)) is the Jacalin-type lectin domain.

It belongs to the jacalin lectin family. As to expression, expressed in stems, leaves and flowers. Not detected in roots.

Its function is as follows. Confers broad resistance to potexviruses. Inhibits virus accumulation at the cellular level. The protein is Jacalin-related lectin 15 (JAL15) of Arabidopsis thaliana (Mouse-ear cress).